Reading from the N-terminus, the 545-residue chain is CTP synthase (545 aa).

The segment at 1 to 266 is amidoligase domain; sequence MTTRYIFVTG…DDLVIKRFNL (266 aa). Ser14 is a binding site for CTP. Ser14 is a binding site for UTP. ATP contacts are provided by residues 15–20 and Asp72; that span reads SLGKGI. 2 residues coordinate Mg(2+): Asp72 and Glu140. CTP contacts are provided by residues 147 to 149, 187 to 192, and Lys223; these read DIE and KTKPTQ. Residues 187–192 and Lys223 contribute to the UTP site; that span reads KTKPTQ. ATP is bound at residue 239–241; sequence KDV. The Glutamine amidotransferase type-1 domain occupies 291–542; sequence TIGMVGKYIE…IAASYAYQKR (252 aa). Gly352 lines the L-glutamine pocket. Cys379 functions as the Nucleophile; for glutamine hydrolysis in the catalytic mechanism. L-glutamine-binding positions include 380–383, Glu403, and Arg470; that span reads LGMQ. Active-site residues include His515 and Glu517.

The protein belongs to the CTP synthase family. As to quaternary structure, homotetramer.

It carries out the reaction UTP + L-glutamine + ATP + H2O = CTP + L-glutamate + ADP + phosphate + 2 H(+). The catalysed reaction is L-glutamine + H2O = L-glutamate + NH4(+). The enzyme catalyses UTP + NH4(+) + ATP = CTP + ADP + phosphate + 2 H(+). It participates in pyrimidine metabolism; CTP biosynthesis via de novo pathway; CTP from UDP: step 2/2. Allosterically activated by GTP, when glutamine is the substrate; GTP has no effect on the reaction when ammonia is the substrate. The allosteric effector GTP functions by stabilizing the protein conformation that binds the tetrahedral intermediate(s) formed during glutamine hydrolysis. Inhibited by the product CTP, via allosteric rather than competitive inhibition. In terms of biological role, catalyzes the ATP-dependent amination of UTP to CTP with either L-glutamine or ammonia as the source of nitrogen. Regulates intracellular CTP levels through interactions with the four ribonucleotide triphosphates. The polypeptide is CTP synthase (Shewanella frigidimarina (strain NCIMB 400)).